A 398-amino-acid polypeptide reads, in one-letter code: MKILVLNCGSSSIKYKLFDMTTKEVLAQGGIEKIGLVGSFLKLTLPNGEKKILEKDIPEHTAGIEFILNTLVSPEYGAIKSLDEINAVGHRMVHGGERFSESVLLNKEVLDAFIACNDLAPLHNPANLKGVNAVSAILPNVPQVGVFDTAFHQTMPDYAYMYAIPYELYEKYGVRRYGFHGTSHRYVSQRVCEFLGVDPKGKKIITCHIGNGGSISAIKDGKCIDTSMGLTPLEGLVMGTRSGDIDAGAVTFIMEKEGLNATGVSNLLNKKSGVLGVSGVSSDMRELEAAVAAGNPKAILAEKMYFYRIKKYIGAYAAALGGVDIILFTGGVGENQANCRSEVCEGLEFMGVKIDLEKNKVRGEEAIISADDSKVTVAVIPTDEELMIASDTLAILNK.

N7 lines the Mg(2+) pocket. K14 provides a ligand contact to ATP. R91 is a substrate binding site. D148 functions as the Proton donor/acceptor in the catalytic mechanism. Residues 208–212 (HIGNG), 283–285 (DMR), and 331–335 (GVGEN) each bind ATP. Residue E384 participates in Mg(2+) binding.

Belongs to the acetokinase family. As to quaternary structure, homodimer. Mg(2+) serves as cofactor. Mn(2+) is required as a cofactor.

The protein localises to the cytoplasm. It catalyses the reaction acetate + ATP = acetyl phosphate + ADP. It functions in the pathway metabolic intermediate biosynthesis; acetyl-CoA biosynthesis; acetyl-CoA from acetate: step 1/2. In terms of biological role, catalyzes the formation of acetyl phosphate from acetate and ATP. Can also catalyze the reverse reaction. This is Acetate kinase from Phocaeicola vulgatus (strain ATCC 8482 / DSM 1447 / JCM 5826 / CCUG 4940 / NBRC 14291 / NCTC 11154) (Bacteroides vulgatus).